Consider the following 238-residue polypeptide: Pyridoxine 5'-phosphate synthase (238 aa).

2 residues coordinate 3-amino-2-oxopropyl phosphate: N7 and R18. Residue H43 is the Proton acceptor of the active site. 1-deoxy-D-xylulose 5-phosphate-binding residues include R45 and H50. E70 serves as the catalytic Proton acceptor. A 1-deoxy-D-xylulose 5-phosphate-binding site is contributed by T100. H190 functions as the Proton donor in the catalytic mechanism. 3-amino-2-oxopropyl phosphate contacts are provided by residues D191 and 213-214 (GH).

This sequence belongs to the PNP synthase family. In terms of assembly, homooctamer; tetramer of dimers.

It is found in the cytoplasm. It carries out the reaction 3-amino-2-oxopropyl phosphate + 1-deoxy-D-xylulose 5-phosphate = pyridoxine 5'-phosphate + phosphate + 2 H2O + H(+). It functions in the pathway cofactor biosynthesis; pyridoxine 5'-phosphate biosynthesis; pyridoxine 5'-phosphate from D-erythrose 4-phosphate: step 5/5. Catalyzes the complicated ring closure reaction between the two acyclic compounds 1-deoxy-D-xylulose-5-phosphate (DXP) and 3-amino-2-oxopropyl phosphate (1-amino-acetone-3-phosphate or AAP) to form pyridoxine 5'-phosphate (PNP) and inorganic phosphate. This Parabacteroides distasonis (strain ATCC 8503 / DSM 20701 / CIP 104284 / JCM 5825 / NCTC 11152) protein is Pyridoxine 5'-phosphate synthase.